Here is a 95-residue protein sequence, read N- to C-terminus: Small ribosomal subunit protein bS20 (95 aa).

It belongs to the bacterial ribosomal protein bS20 family.

Binds directly to 16S ribosomal RNA. The chain is Small ribosomal subunit protein bS20 from Ehrlichia chaffeensis (strain ATCC CRL-10679 / Arkansas).